A 678-amino-acid polypeptide reads, in one-letter code: Growth arrest-specific protein 6 (678 aa).

Positions 1–30 (MAPSLSPGPAALRRAPQLLLLLLAAECALA) are cleaved as a signal peptide. Residues 53 to 94 (FEEAKQGHLERECVEELCSREEAREVFENDPETDYFYPRYLD) enclose the Gla domain. Cysteines 65 and 70 form a disulfide. S71 is modified (phosphoserine; by FAM20C). The 39-residue stretch at 116-154 (LPDQCTPNPCDRKGTQACQDLMGNFFCLCKAGWGGRLCD) folds into the EGF-like 1; calcium-binding domain. 14 disulfides stabilise this stretch: C120/C133, C125/C142, C144/C153, C160/C171, C167/C180, C182/C195, C201/C212, C207/C221, C223/C236, C242/C251, C247/C260, C262/C277, C283/C570, and C444/C470. The EGF-like 2; calcium-binding domain occupies 156-196 (DVNECSQENGGCLQICHNKPGSFHCSCHSGFELSSDGRTCQ). In terms of domain architecture, EGF-like 3; calcium-binding spans 197 to 237 (DIDECADSEACGEARCKNLPGSYSCLCDEGFAYSSQEKACR). An EGF-like 4; calcium-binding domain is found at 238–278 (DVDECLQGRCEQVCVNSPGSYTCHCDGRGGLKLSQDMDTCE). Laminin G-like domains lie at 298–470 (GRMF…RMQC) and 477–670 (GSFY…AHSC). Ca(2+) contacts are provided by D329 and E331. The N-linked (GlcNAc...) asparagine glycan is linked to N420. R440 lines the Ca(2+) pocket. T621 and T637 each carry phosphothreonine. A Phosphotyrosine modification is found at Y640. C643 and C670 are joined by a disulfide. D656 is a binding site for Ca(2+).

In terms of assembly, heterodimer and heterotetramer with AXL. Proteolytically processed after secretion to yield a N-terminal 36 kDa protein and a C-terminal 50 kDa protein including the laminin G-like domains which activates AXL. Post-translationally, gamma-carboxyglutamate residues are formed by vitamin K dependent carboxylation. These residues are essential for the binding of calcium. As to expression, plasma. Isoform 1 and isoform 2 are widely expressed, isoform 1 being expressed at higher levels than isoform 2 in most tissues. Isoform 2 is the predominant form in spleen.

The protein localises to the secreted. Its function is as follows. Ligand for tyrosine-protein kinase receptors AXL, TYRO3 and MER whose signaling is implicated in cell growth and survival, cell adhesion and cell migration. GAS6/AXL signaling plays a role in various processes such as endothelial cell survival during acidification by preventing apoptosis, optimal cytokine signaling during human natural killer cell development, hepatic regeneration, gonadotropin-releasing hormone neuron survival and migration, platelet activation, or regulation of thrombotic responses. (Microbial infection) Can bridge virus envelope phosphatidylserine to the TAM receptor tyrosine kinase Axl to mediate viral entry by apoptotic mimicry. Plays a role in Dengue cell entry by apoptotic mimicry. Plays a role in Vaccinia virus cell entry by apoptotic mimicry. Plays a role in ebolavirus and marburgvirus cell entry by apoptotic mimicry. In Homo sapiens (Human), this protein is Growth arrest-specific protein 6.